The following is a 142-amino-acid chain: Hemoglobin subunit alpha-2 (142 aa).

One can recognise a Globin domain in the interval 2–142 (LLSADDKKHI…VSTVLTSKYR (141 aa)). H59 is an O2 binding site. A heme b-binding site is contributed by H88.

Belongs to the globin family. Heterotetramer of two alpha chains and two beta chains. Red blood cells.

Involved in oxygen transport from the lung to the various peripheral tissues. In Xenopus laevis (African clawed frog), this protein is Hemoglobin subunit alpha-2 (hba2).